The primary structure comprises 236 residues: Apoptosis regulator Bcl-2 (236 aa).

Residues 10–30 (DNREIVMKYIHYKLSQRGYEW) carry the BH4 motif. Thr-69 is subject to Phosphothreonine; by MAPK8. Ser-70 is modified (phosphoserine; by MAPK8 and PKC). Ser-84 carries the post-translational modification Phosphoserine; by MAPK8. The BH3 signature appears at 90–104 (VHLTLRRAGDDFSRR). Residues 133-152 (ELFRDGVNWGRIVAFFEFGG) carry the BH1 motif. The BH2 signature appears at 184-199 (TWIQDNGGWDAFVELY). The chain crosses the membrane as a helical span at residues 209–230 (FSWLSLKALLSLALVGACITLG).

This sequence belongs to the Bcl-2 family. As to quaternary structure, forms homodimers, and heterodimers with BAX, BAD, BAK and Bcl-X(L). Heterodimerization with BAX requires intact BH1 and BH2 motifs, and is necessary for anti-apoptotic activity. Component of the complex, at least composed of LRPPRC, BECN1 and BCL2; the interactions prevent BECN1 from forming an autophagy-inducing complex with PIK3C3. Interacts with EI24. Also interacts with APAF1, BBC3, BCL2L1, BNIPL, MRPL41 and TP53BP2. Binding to FKBP8 seems to target BCL2 to the mitochondria and probably interferes with the binding of BCL2 to its targets. Interacts with BAG1 in an ATP-dependent manner. Interacts with RAF1 (the 'Ser-338' and 'Ser-339' phosphorylated form). Interacts (via the BH4 domain) with EGLN3; the interaction prevents the formation of the BAX-BCL2 complex and inhibits the anti-apoptotic activity of BCL2. Interacts with G0S2; this interaction also prevents the formation of the anti-apoptotic BAX-BCL2 complex. Interacts with RTL10/BOP. Interacts with the SCF(FBXO10) complex. Interacts (via the loop between motifs BH4 and BH3) with NLRP1 (via LRR repeats), but not with NLRP2, NLRP3, NLRP4, PYCARD, nor MEFV. Interacts with GIMAP3/IAN4, GIMAP4/IAN1 and GIMAP5/IAN5. Interacts with BCAP31. Interacts with IRF3; the interaction is inhibited by Sendai virus infection. Interacts with BECN1; thereby inhibiting autophagy in non-starvation conditions. Interacts with AMBRA1; thereby inhibiting autophagy. In terms of processing, phosphorylation/dephosphorylation on Ser-70 regulates anti-apoptotic activity. Growth factor-stimulated phosphorylation on Ser-70 by PKC is required for the anti-apoptosis activity and occurs during the G2/M phase of the cell cycle. In the absence of growth factors, BCL2 appears to be phosphorylated by other protein kinases such as ERKs and stress-activated kinases. Phosphorylated by MAPK8/JNK1 at Thr-69, Ser-70 and Ser-84, which stimulates starvation-induced autophagy. Dephosphorylated by protein phosphatase 2A (PP2A). Proteolytically cleaved by caspases during apoptosis. The cleaved protein, lacking the BH4 motif, has pro-apoptotic activity, causes the release of cytochrome c into the cytosol promoting further caspase activity. Post-translationally, monoubiquitinated by PRKN, leading to an increase in its stability. Ubiquitinated by SCF(FBXO10), leading to its degradation by the proteasome.

The protein resides in the mitochondrion outer membrane. Its subcellular location is the nucleus membrane. It is found in the endoplasmic reticulum membrane. The protein localises to the cytoplasm. Its function is as follows. Suppresses apoptosis in a variety of cell systems including factor-dependent lymphohematopoietic and neural cells. Regulates cell death by controlling the mitochondrial membrane permeability. Appears to function in a feedback loop system with caspases. Inhibits caspase activity either by preventing the release of cytochrome c from the mitochondria and/or by binding to the apoptosis-activating factor (APAF-1). Also acts as an inhibitor of autophagy: interacts with BECN1 and AMBRA1 during non-starvation conditions and inhibits their autophagy function. May attenuate inflammation by impairing NLRP1-inflammasome activation, hence CASP1 activation and IL1B release. The protein is Apoptosis regulator Bcl-2 (BCL2) of Canis lupus familiaris (Dog).